A 539-amino-acid chain; its full sequence is AT-rich interactive domain-containing protein 3A (539 aa).

Positions 1-190 (MKLQAVMETL…PLSGHPQLQD (190 aa)) are disordered. The span at 55 to 73 (LKIQRAQAAALAAMRAAAA) shows a compositional bias: low complexity. Over residues 84 to 100 (SEEEDGESMASDEEDEK) the composition is skewed to acidic residues. Residues 101–110 (ERDGESERYQ) show a composition bias toward basic and acidic residues. Residues 113 to 141 (ASEEEDLKGKWDEDDFEDEGEDEYEDMEE) show a composition bias toward acidic residues. The span at 161-173 (HSSQQAFPSQRSQ) shows a compositional bias: polar residues. Residues 209–301 (DPKRKEFLDD…YLYPYECEKR (93 aa)) enclose the ARID domain. Residues 404–499 (AALEQLREKL…GVLFAQPPTS (96 aa)) enclose the REKLES domain. Residues 405–448 (ALEQLREKLESGEPPEKKMALGSEEQQRIIQRTIQHNLLAMTAQ) form an important for nuclear localization region. The segment at 450–471 (PMNIRINSQAEGRQDSAVNLTT) is homodimerization. The important for cytoplasmic localization stretch occupies residues 495–502 (QPPTSASG). Over residues 497-512 (PTSASGTSKGSSNRTG) the composition is skewed to polar residues. The tract at residues 497-539 (PTSASGTSKGSSNRTGSIGGGSSNSQAAPPSTPSAPNSNNPSP) is disordered. Residues 519 to 539 (SNSQAAPPSTPSAPNSNNPSP) are compositionally biased toward low complexity.

In terms of assembly, homodimer.

It localises to the nucleus. Its subcellular location is the cytoplasm. Transcription factor required for smad1 and smad2-mediated responses to TGFbeta during mesoderm induction. The polypeptide is AT-rich interactive domain-containing protein 3A (arid3a) (Xenopus laevis (African clawed frog)).